Here is a 176-residue protein sequence, read N- to C-terminus: Ribosome rescue factor SmrB (176 aa).

In terms of domain architecture, Smr spans 93–168; that stretch reads LDLHGYRQSE…GDAALLVLID (76 aa).

The protein belongs to the SmrB family. As to quaternary structure, associates with collided ribosomes, but not with correctly translating polysomes.

Acts as a ribosome collision sensor. Detects stalled/collided disomes (pairs of ribosomes where the leading ribosome is stalled and a second ribosome has collided with it) and endonucleolytically cleaves mRNA at the 5' boundary of the stalled ribosome. Stalled/collided disomes form a new interface (primarily via the 30S subunits) that binds SmrB. Cleaved mRNA becomes available for tmRNA ligation, leading to ribosomal subunit dissociation and rescue of stalled ribosomes. This Shewanella baltica (strain OS155 / ATCC BAA-1091) protein is Ribosome rescue factor SmrB.